The sequence spans 334 residues: Holliday junction branch migration complex subunit RuvB (334 aa).

Residues 4 to 184 (ADRLVSAGVI…FGIVQRLEFY (181 aa)) form a large ATPase domain (RuvB-L) region. Residues Ile-23, Arg-24, Gly-65, Lys-68, Thr-69, Thr-70, 131-133 (EDY), Arg-174, Tyr-184, and Arg-221 each bind ATP. Residue Thr-69 coordinates Mg(2+). A small ATPAse domain (RuvB-S) region spans residues 185-255 (RVEDLQHIVG…VASRALDMLS (71 aa)). The segment at 258-334 (SEGFDYMDRK…YKHFGITREG (77 aa)) is head domain (RuvB-H). Positions 294, 313, and 318 each coordinate DNA.

The protein belongs to the RuvB family. Homohexamer. Forms an RuvA(8)-RuvB(12)-Holliday junction (HJ) complex. HJ DNA is sandwiched between 2 RuvA tetramers; dsDNA enters through RuvA and exits via RuvB. An RuvB hexamer assembles on each DNA strand where it exits the tetramer. Each RuvB hexamer is contacted by two RuvA subunits (via domain III) on 2 adjacent RuvB subunits; this complex drives branch migration. In the full resolvosome a probable DNA-RuvA(4)-RuvB(12)-RuvC(2) complex forms which resolves the HJ.

Its subcellular location is the cytoplasm. It catalyses the reaction ATP + H2O = ADP + phosphate + H(+). Its function is as follows. The RuvA-RuvB-RuvC complex processes Holliday junction (HJ) DNA during genetic recombination and DNA repair, while the RuvA-RuvB complex plays an important role in the rescue of blocked DNA replication forks via replication fork reversal (RFR). RuvA specifically binds to HJ cruciform DNA, conferring on it an open structure. The RuvB hexamer acts as an ATP-dependent pump, pulling dsDNA into and through the RuvAB complex. RuvB forms 2 homohexamers on either side of HJ DNA bound by 1 or 2 RuvA tetramers; 4 subunits per hexamer contact DNA at a time. Coordinated motions by a converter formed by DNA-disengaged RuvB subunits stimulates ATP hydrolysis and nucleotide exchange. Immobilization of the converter enables RuvB to convert the ATP-contained energy into a lever motion, pulling 2 nucleotides of DNA out of the RuvA tetramer per ATP hydrolyzed, thus driving DNA branch migration. The RuvB motors rotate together with the DNA substrate, which together with the progressing nucleotide cycle form the mechanistic basis for DNA recombination by continuous HJ branch migration. Branch migration allows RuvC to scan DNA until it finds its consensus sequence, where it cleaves and resolves cruciform DNA. The protein is Holliday junction branch migration complex subunit RuvB of Erwinia tasmaniensis (strain DSM 17950 / CFBP 7177 / CIP 109463 / NCPPB 4357 / Et1/99).